The primary structure comprises 66 residues: Protein I177L (66 aa).

A glycan (N-linked (GlcNAc...) asparagine; by host) is linked at Asn11.

Belongs to the asfivirus I177L family.

It is found in the virion. This chain is Protein I177L, found in Ornithodoros (relapsing fever ticks).